The chain runs to 252 residues: Pantothenate synthetase (252 aa).

Residue 29–36 coordinates ATP; it reads MGNLHAGH. His36 functions as the Proton donor in the catalytic mechanism. (R)-pantoate is bound at residue Gln60. Gln60 contacts beta-alanine. An ATP-binding site is contributed by 146–149; the sequence is GEKD. Position 152 (Gln152) interacts with (R)-pantoate. ATP is bound by residues Val175 and 183 to 186; that span reads CSSR.

This sequence belongs to the pantothenate synthetase family. As to quaternary structure, homodimer.

The protein localises to the cytoplasm. The catalysed reaction is (R)-pantoate + beta-alanine + ATP = (R)-pantothenate + AMP + diphosphate + H(+). The protein operates within cofactor biosynthesis; (R)-pantothenate biosynthesis; (R)-pantothenate from (R)-pantoate and beta-alanine: step 1/1. Catalyzes the condensation of pantoate with beta-alanine in an ATP-dependent reaction via a pantoyl-adenylate intermediate. In Legionella pneumophila (strain Lens), this protein is Pantothenate synthetase.